The primary structure comprises 385 residues: MRFIKKYPLLNIVNSFLIDYPAPPNISYLWNFGALAAFCLGIQIVTGIFLAMFYVPSIESAFSSVQYIMRDVNYGWLIRYIHANGASFFFICVYIHVFRGLYYNSYITPRELLWNLGVTILIVMILTAFLGYVLPWGQMSFWAATVITSLFSAIPVVGEYIVIWLWGGFSVDNATLNRFFSLHYLLPFVIALLSLIHVAVLHESGSSNPLNIALSVANKVPFHPYFIFKDLLGIIFFLIVFCYAVFFKPDSIIDPINNVPANPLVTPTHIVPEWYFLPFYAILRSIPNKLGGVITLGLALIVLFLLPFITNNVFKGSFFEISKTILFWSFFSVCVLLGWIGFKPIEDPYLMLGQMLTVLYFFYFFSLAVIVPTLQAYTFKNVFAK.

Helical transmembrane passes span 32–52 (FGALAAFCLGIQIVTGIFLAM), 76–98 (WLIRYIHANGASFFFICVYIHVF), 113–133 (LWNLGVTILIVMILTAFLGYV), and 179–199 (FFSLHYLLPFVIALLSLIHVA). Heme b contacts are provided by histidine 82 and histidine 96. Heme b contacts are provided by histidine 183 and histidine 197. Histidine 202 is a binding site for a ubiquinone. A run of 4 helical transmembrane segments spans residues 226-246 (FIFKDLLGIIFFLIVFCYAVF), 290-310 (LGGVITLGLALIVLFLLPFIT), 322-342 (SKTILFWSFFSVCVLLGWIGF), and 349-369 (YLMLGQMLTVLYFFYFFSLAV).

This sequence belongs to the cytochrome b family. As to quaternary structure, the main subunits of complex b-c1 are: cytochrome b, cytochrome c1 and the Rieske protein. Requires heme b as cofactor.

It localises to the mitochondrion inner membrane. In terms of biological role, component of the ubiquinol-cytochrome c reductase complex (complex III or cytochrome b-c1 complex) that is part of the mitochondrial respiratory chain. The b-c1 complex mediates electron transfer from ubiquinol to cytochrome c. Contributes to the generation of a proton gradient across the mitochondrial membrane that is then used for ATP synthesis. The chain is Cytochrome b (MT-CYB) from Acanthamoeba castellanii (Amoeba).